A 488-amino-acid chain; its full sequence is Cysteine--tRNA ligase (488 aa).

Cysteine 40 is a binding site for Zn(2+). Residues 42 to 52 carry the 'HIGH' region motif; sequence MTVYDYCHIGH. Residues cysteine 221, histidine 246, and glutamate 250 each coordinate Zn(2+). The 'KMSKS' region signature appears at 278–282; sequence KMSKS. Lysine 281 contributes to the ATP binding site.

This sequence belongs to the class-I aminoacyl-tRNA synthetase family. As to quaternary structure, monomer. The cofactor is Zn(2+).

The protein resides in the cytoplasm. It carries out the reaction tRNA(Cys) + L-cysteine + ATP = L-cysteinyl-tRNA(Cys) + AMP + diphosphate. In Psychrobacter cryohalolentis (strain ATCC BAA-1226 / DSM 17306 / VKM B-2378 / K5), this protein is Cysteine--tRNA ligase.